The sequence spans 603 residues: Bifunctional 3-dehydroquinate dehydratase/shikimate dehydrogenase, chloroplastic (603 aa).

The span at 1–10 (MAASSTNARL) shows a compositional bias: polar residues. A disordered region spans residues 1 to 22 (MAASSTNARLTNPPRLLSKPRL). A chloroplast-targeting transit peptide spans 1 to 66 (MAASSTNARL…VVFSDQRRRR (66 aa)). Over residues 13–22 (PPRLLSKPRL) the composition is skewed to low complexity. A 3-dehydroquinate dehydratase region spans residues 96–313 (ICAPVMADSI…QPTIKDLLDL (218 aa)). 3-dehydroshikimate-binding residues include glutamate 124, arginine 126, and arginine 155. Residue histidine 214 is the Proton acceptor; for 3-dehydroquinate dehydratase activity of the active site. Residues lysine 241, arginine 279, serine 300, and glutamine 304 each coordinate 3-dehydroshikimate. The Schiff-base intermediate with substrate; for 3-dehydroquinate dehydratase activity role is filled by lysine 241. Residues 328–558 (IIGKPVSHSK…VYTPRITRLL (231 aa)) form a shikimate dehydrogenase region. Residues serine 336, serine 338, threonine 381, lysine 385, asparagine 406, and aspartate 423 each coordinate shikimate. Residue lysine 385 is the For shikimate dehydrogenase activity of the active site. Aspartate 423 (for shikimate dehydrogenase activity) is an active-site residue. NADP(+) contacts are provided by alanine 461, glycine 463, alanine 464, asparagine 483, threonine 485, arginine 488, methionine 525, and alanine 548. Tyrosine 550 is a shikimate binding site. Glycine 571 contributes to the NADP(+) binding site. Residues glutamine 578 and glutamine 582 each coordinate shikimate.

The protein in the N-terminal section; belongs to the type-I 3-dehydroquinase family. It in the C-terminal section; belongs to the shikimate dehydrogenase family. Monomer.

It localises to the plastid. It is found in the chloroplast. The catalysed reaction is 3-dehydroquinate = 3-dehydroshikimate + H2O. It carries out the reaction shikimate + NADP(+) = 3-dehydroshikimate + NADPH + H(+). It functions in the pathway metabolic intermediate biosynthesis; chorismate biosynthesis; chorismate from D-erythrose 4-phosphate and phosphoenolpyruvate: step 3/7. Its pathway is metabolic intermediate biosynthesis; chorismate biosynthesis; chorismate from D-erythrose 4-phosphate and phosphoenolpyruvate: step 4/7. Its function is as follows. Bifunctional dehydroquinate dehydratase-shikimate dehydrogenase enzyme that catalyzes two steps in the chorismate biosynthesis pathway. This Arabidopsis thaliana (Mouse-ear cress) protein is Bifunctional 3-dehydroquinate dehydratase/shikimate dehydrogenase, chloroplastic.